The following is a 536-amino-acid chain: MAEHAPRRCCLGWDFSTQQVKVVAVDAELNVFYEESVHFDRDLPEFGTQGGVHVHKDGLTVTSPVLMWVQALDIILEKMKASGFDFSQVLALSGAGQQHGSIYWKAGAQQALTSLSPDLRLHQQLQDCFSISDCPVWMDSSTTAQCRQLEAAVGGAQALSCLTGSRAYERFTGNQIAKIYQQNPEAYSHTERISLVSSFAASLFLGSYSPIDYSDGSGMNLLQIQDKVWSQACLGACAPHLEEKLSPPVPSCSVVGAISSYYVQRYGFPPGCKVVAFTGDNPASLAGMRLEEGDIAVSLGTSDTLFLWLQEPMPALEGHIFCNPVDSQHYMALLCFKNGSLMREKIRNESVSRSWSDFSKALQSTEMGNGGNLGFYFDVMEITPEIIGRHRFNTENHKVAAFPGDVEVRALIEGQFMAKRIHAEGLGYRVMSKTKILATGGASHNREILQVLADVFDAPVYVIDTANSACVGSAYRAFHGLAGGTDVPFSEVVKLAPNPRLAATPSPGASQVYEALLPQYAKLEQRILSQTRGPPE.

The substrate site is built by His-99, Arg-170, Asp-280, and Asn-281. ATP is bound by residues Trp-355, 441–442 (GA), and Asn-445.

Belongs to the FGGY kinase family. In terms of assembly, monomer.

It carries out the reaction D-xylulose + ATP = D-xylulose 5-phosphate + ADP + H(+). Its function is as follows. Phosphorylates D-xylulose to produce D-xylulose 5-phosphate, a molecule that may play an important role in the regulation of glucose metabolism and lipogenesis. In Homo sapiens (Human), this protein is Xylulose kinase (XYLB).